Reading from the N-terminus, the 361-residue chain is MVWALGLMSGTSLDGVDAALIETDGVRIGRIGPSLTVPYSPELRGRTRELLDRAAGLAPDDAEVLAVTRELTLRHVDAVRLLREKAPGLEPAVIGFHGQTILHQPERGRSWQIGDARLLQDLCGVPVVHDFRSRDLENGGEGAPLVPVFHAALLHQEVRPVAVLNIGGVANVTVLGQQEPNGQRGVWACDTGPGNALLDDWALQHTGQPCDFGGALAASGAVHQDVLERLLAIPYFARPMPKSLDRLSFHPEAMACVRDLSAADGAATLASFTVEAVAGTTFPVRPEGWFVAGGGRHNPVLMDGLNHRLGNVASVDVLGWDGDALEAQCFGLLAMRFLRGLPSSWPGTTGVRQPCIAGRAV.

Residue 10–17 (GTSLDGVD) participates in ATP binding.

Belongs to the anhydro-N-acetylmuramic acid kinase family.

The enzyme catalyses 1,6-anhydro-N-acetyl-beta-muramate + ATP + H2O = N-acetyl-D-muramate 6-phosphate + ADP + H(+). It participates in amino-sugar metabolism; 1,6-anhydro-N-acetylmuramate degradation. The protein operates within cell wall biogenesis; peptidoglycan recycling. Catalyzes the specific phosphorylation of 1,6-anhydro-N-acetylmuramic acid (anhMurNAc) with the simultaneous cleavage of the 1,6-anhydro ring, generating MurNAc-6-P. Is required for the utilization of anhMurNAc either imported from the medium or derived from its own cell wall murein, and thus plays a role in cell wall recycling. This Gluconobacter oxydans (strain 621H) (Gluconobacter suboxydans) protein is Anhydro-N-acetylmuramic acid kinase.